We begin with the raw amino-acid sequence, 516 residues long: Nuclear speckle splicing regulatory protein 1 (516 aa).

Disordered stretches follow at residues 1–43 (MATS…GESL), 111–137 (ERKKEQERRDERKIQKEREAEGEKFAD), 151–170 (KERQEELEREKREAELEAAL), and 188–494 (QTVG…SSAR). Ser-33 is subject to Phosphoserine. Positions 100–176 (KYINQLLRAV…EAALDVKKQK (77 aa)) form a coiled coil. Positions 207 to 221 (TSSAAAERSPSPEST) are enriched in low complexity. 2 stretches are compositionally biased toward basic and acidic residues: residues 222–239 (ANRRESEAESHSDDDQVD) and 271–466 (ERER…KLVE). Residues 358 to 401 (KGERDRRDNSPKDRERDRKGERDRRDNSPKDRERETRDKSPKDR) adopt a coiled-coil conformation.

The protein belongs to the NSRP1 family.

This chain is Nuclear speckle splicing regulatory protein 1 (nsrp1), found in Danio rerio (Zebrafish).